We begin with the raw amino-acid sequence, 291 residues long: Shikimate dehydrogenase (NADP(+)) (291 aa).

Shikimate-binding positions include 26–28 and serine 73; that span reads SLS. Lysine 77 serves as the catalytic Proton acceptor. The shikimate site is built by asparagine 98 and aspartate 113. NADP(+) is bound by residues 137-141 and valine 238; that span reads GAGGA. Tyrosine 240 is a shikimate binding site. NADP(+) is bound at residue glycine 261.

Belongs to the shikimate dehydrogenase family. Homodimer.

The catalysed reaction is shikimate + NADP(+) = 3-dehydroshikimate + NADPH + H(+). It functions in the pathway metabolic intermediate biosynthesis; chorismate biosynthesis; chorismate from D-erythrose 4-phosphate and phosphoenolpyruvate: step 4/7. Its function is as follows. Involved in the biosynthesis of the chorismate, which leads to the biosynthesis of aromatic amino acids. Catalyzes the reversible NADPH linked reduction of 3-dehydroshikimate (DHSA) to yield shikimate (SA). In Listeria monocytogenes serotype 4b (strain F2365), this protein is Shikimate dehydrogenase (NADP(+)).